A 550-amino-acid chain; its full sequence is Methyl-coenzyme M reductase subunit alpha (550 aa).

Q147 contacts coenzyme F430. Residues R225, K256–H257, and R270 each bind coenzyme B. H257 is modified (pros-methylhistidine). A 5-methylarginine modification is found at R271. Residue Y333 participates in coenzyme M binding. Q400 is subject to 2-methylglutamine. Y444 contributes to the coenzyme M binding site. G445 is subject to 1-thioglycine. D450 bears the (Z)-2,3-didehydroaspartate mark. C452 carries the post-translational modification S-methylcysteine.

This sequence belongs to the methyl-coenzyme M reductase alpha subunit family. As to quaternary structure, MCR is a hexamer of two alpha, two beta, and two gamma chains, forming a dimer of heterotrimers. The cofactor is coenzyme F430. In terms of processing, the alpha subunit contains six modified amino acids near the active site region. Is methylated on His-257, Arg-271, Gln-400 and Cys-452, probably by the action of specific S-adenosylmethionine-dependent methyltransferases. Also contains a thioglycine at position 445, forming a thiopeptide bond. Contains a didehydroaspartate residue at position 450. The methylation on C5 of Arg-271 is a post-translational methylation not essential in vivo, but which plays a role for the stability and structural integrity of MCR.

It localises to the cytoplasm. It catalyses the reaction coenzyme B + methyl-coenzyme M = methane + coenzyme M-coenzyme B heterodisulfide. It functions in the pathway one-carbon metabolism; methyl-coenzyme M reduction; methane from methyl-coenzyme M: step 1/1. Component of the methyl-coenzyme M reductase (MCR) I that catalyzes the reductive cleavage of methyl-coenzyme M (CoM-S-CH3 or 2-(methylthio)ethanesulfonate) using coenzyme B (CoB or 7-mercaptoheptanoylthreonine phosphate) as reductant which results in the production of methane and the mixed heterodisulfide of CoB and CoM (CoM-S-S-CoB). This is the final step in methanogenesis. In Methanothermobacter thermautotrophicus (strain ATCC 29096 / DSM 1053 / JCM 10044 / NBRC 100330 / Delta H) (Methanobacterium thermoautotrophicum), this protein is Methyl-coenzyme M reductase subunit alpha (mcrA).